Reading from the N-terminus, the 338-residue chain is Fructose-1,6-bisphosphatase class 1 (338 aa).

Mg(2+) is bound by residues Glu-91, Asp-113, Leu-115, and Asp-116. Residues 116–119, Asn-211, Tyr-244, and Lys-277 contribute to the substrate site; that span reads DGSS. Glu-283 contributes to the Mg(2+) binding site.

This sequence belongs to the FBPase class 1 family. Homotetramer. Mg(2+) serves as cofactor.

The protein resides in the cytoplasm. It carries out the reaction beta-D-fructose 1,6-bisphosphate + H2O = beta-D-fructose 6-phosphate + phosphate. It participates in carbohydrate biosynthesis; gluconeogenesis. This Oleidesulfovibrio alaskensis (strain ATCC BAA-1058 / DSM 17464 / G20) (Desulfovibrio alaskensis) protein is Fructose-1,6-bisphosphatase class 1.